We begin with the raw amino-acid sequence, 547 residues long: Chaperonin GroEL (547 aa).

ATP is bound by residues 30-33, K51, 87-91, G415, and D495; these read TLGP and DGTTT.

The protein belongs to the chaperonin (HSP60) family. Forms a cylinder of 14 subunits composed of two heptameric rings stacked back-to-back. Interacts with the co-chaperonin GroES.

Its subcellular location is the cytoplasm. It catalyses the reaction ATP + H2O + a folded polypeptide = ADP + phosphate + an unfolded polypeptide.. In terms of biological role, together with its co-chaperonin GroES, plays an essential role in assisting protein folding. The GroEL-GroES system forms a nano-cage that allows encapsulation of the non-native substrate proteins and provides a physical environment optimized to promote and accelerate protein folding. This Aggregatibacter actinomycetemcomitans (Actinobacillus actinomycetemcomitans) protein is Chaperonin GroEL.